The primary structure comprises 393 residues: Autophagy-related protein 18c (393 aa).

4 WD repeats span residues 27–65, 70–114, 199–239, and 244–283; these read KEEAELVSVCWNQDSSCFAAGTSHGFRIYNCEPFKETFR, DGGF…CISE, AHDS…RLQE, and VDRADIYSIALSPNVQWLAVSSDKGTVHIFSLRVRVVGED.

This sequence belongs to the WD repeat PROPPIN family. Component of the PI(3,5)P2 regulatory complex at least composed of ATG18, SAC/FIG4, FAB1 and VAC14. In terms of tissue distribution, expressed in roots, stems, flowers and leaves.

It localises to the preautophagosomal structure membrane. It is found in the vacuole membrane. Functionally, the PI(3,5)P2 regulatory complex regulates both the synthesis and turnover of phosphatidylinositol 3,5-bisphosphate (PtdIns(3,5)P2). Required for autophagy. This is Autophagy-related protein 18c (ATG18C) from Arabidopsis thaliana (Mouse-ear cress).